Here is a 624-residue protein sequence, read N- to C-terminus: UvrABC system protein C (624 aa).

One can recognise a GIY-YIG domain in the interval 25–104 (AEPGVYFMRD…IKQHQPHFNV (80 aa)). Residues 214-249 (SELIDTLTPQMEAAAENLNFEQAARIRDQINGLKTL) enclose the UVR domain.

This sequence belongs to the UvrC family. As to quaternary structure, interacts with UvrB in an incision complex.

The protein resides in the cytoplasm. Its function is as follows. The UvrABC repair system catalyzes the recognition and processing of DNA lesions. UvrC both incises the 5' and 3' sides of the lesion. The N-terminal half is responsible for the 3' incision and the C-terminal half is responsible for the 5' incision. The polypeptide is UvrABC system protein C (Cyanothece sp. (strain PCC 7425 / ATCC 29141)).